Consider the following 249-residue polypeptide: Ribosomal RNA small subunit methyltransferase G (249 aa).

S-adenosyl-L-methionine contacts are provided by residues Gly88, Phe93, 111-113 (DAT), 139-140 (AE), and Arg158. The cysteines at positions 164 and 249 are disulfide-linked. The RNA binding stretch occupies residues 245-246 (RH).

This sequence belongs to the methyltransferase superfamily. RNA methyltransferase RsmG family.

It localises to the cytoplasm. It carries out the reaction guanosine(527) in 16S rRNA + S-adenosyl-L-methionine = N(7)-methylguanosine(527) in 16S rRNA + S-adenosyl-L-homocysteine. Specifically methylates the N7 position of guanine in position 527 of 16S rRNA. Shows a marked preference for deproteinized 16S rRNA as substrate and is completely inactive with native 30S subunits as substrate. In Thermus thermophilus (strain ATCC 27634 / DSM 579 / HB8), this protein is Ribosomal RNA small subunit methyltransferase G.